The sequence spans 467 residues: Probable endopeptidase p60 (467 aa).

The signal sequence occupies residues 1-27; that stretch reads MNMKKATIAATAGIAVTAFAAPTIASA. The LysM 1 domain maps to 28-71; that stretch reads STVVVEAGDTLWGIAQSKGTTVDAIKKANNLTTDKIVPGQKLQV. Residues 79-143 form the SH3b domain; it reads KAEKSVSATW…VNGKYLTDKA (65 aa). Disordered regions lie at residues 154 to 199 and 247 to 348; these read KKET…QNAT and KTVA…GSTN. Positions 172 to 185 are enriched in low complexity; it reads KQPTTQQTAPAPKA. The LysM 2 domain occupies 199–242; the sequence is TTHNVKSGDTIWALSVKYGVSVQDIMSWNNLSSSSIYVGQKLAI. The span at 288–348 shows a compositional bias: low complexity; the sequence is TEQQTTTKAP…NTNTNQGSTN (61 aa). The interval 330 to 343 is 7 X 2 AA tandem repeats of T-N; the sequence is TNTNTNTNTNTNTN. Residues 349 to 467 form the NlpC/P60 domain; the sequence is NASASALIAE…GKFLVGFGRV (119 aa). Residue cysteine 379 is the Nucleophile of the active site. Histidine 429 serves as the catalytic Proton acceptor. Asparagine 441 is an active-site residue.

It belongs to the peptidase C40 family.

Its function is as follows. This major extracellular protein may be involved in the invasion of non-professional phagocytic cells by Listeria. This chain is Probable endopeptidase p60 (iap), found in Listeria innocua serovar 6a (strain ATCC BAA-680 / CLIP 11262).